The primary structure comprises 216 residues: Transmembrane protein 186 (216 aa).

Topologically, residues 1–68 (MAFLLRAVPR…IYRFNAIRAL (68 aa)) are mitochondrial matrix. Residues 69–91 (GFLSRLKLAQTAVTVVALPPGFY) traverse the membrane as a helical segment. Residues 92–103 (CYSQGLMTLSSL) are Mitochondrial intermembrane-facing. Residues 104-124 (GLMSGIASFALVMLCWMSHFF) traverse the membrane as a helical segment. The Mitochondrial matrix segment spans residues 125 to 216 (RRLVGILYVN…GTLATLKNSK (92 aa)).

The protein belongs to the TMEM186 family. Part of the mitochondrial complex I assembly/MCIA complex that comprises at least the core subunits TMEM126B, NDUFAF1, ECSIT and ACAD9 and complement subunits such as COA1 and TMEM186. Interacts with MT-ND3.

It localises to the mitochondrion inner membrane. In terms of biological role, as part of the MCIA complex, required for efficient assembly of the mitochondrial complex I. The polypeptide is Transmembrane protein 186 (Rattus norvegicus (Rat)).